A 101-amino-acid chain; its full sequence is Small ribosomal subunit protein uS14 (101 aa).

The protein belongs to the universal ribosomal protein uS14 family. In terms of assembly, part of the 30S ribosomal subunit. Contacts proteins S3 and S10.

In terms of biological role, binds 16S rRNA, required for the assembly of 30S particles and may also be responsible for determining the conformation of the 16S rRNA at the A site. The chain is Small ribosomal subunit protein uS14 from Aliivibrio fischeri (strain MJ11) (Vibrio fischeri).